The chain runs to 372 residues: Cytochrome b (372 aa).

The next 4 helical transmembrane spans lie at 25–45 (FGSMLLTCSALQIMTGFFLSM), 69–90 (WMMQNLHAIGASMFFICVYIHV), 105–125 (WLSGTTLLIMLMATAFFGYVL), and 170–190 (FFALHFILPFGIISLSSLHIM). Positions 75 and 89 each coordinate heme b. His-174 and His-188 together coordinate heme b. His-193 is a binding site for a ubiquinone. A run of 4 helical transmembrane segments spans residues 218-238 (YKDLFMISSMIMIMLLTISFI), 280-300 (LGGALALAMSITILLTVPFTH), 312-332 (FMQLMFWTLVTTFMIITWTAT), and 339-358 (YTMISQVTSSLYFMFFMSNP).

The protein belongs to the cytochrome b family. The cytochrome bc1 complex contains 3 respiratory subunits (MT-CYB, CYC1 and UQCRFS1), 2 core proteins (UQCRC1 and UQCRC2) and probably 6 low-molecular weight proteins. Heme b serves as cofactor.

Its subcellular location is the mitochondrion inner membrane. Component of the ubiquinol-cytochrome c reductase complex (complex III or cytochrome b-c1 complex) that is part of the mitochondrial respiratory chain. The b-c1 complex mediates electron transfer from ubiquinol to cytochrome c. Contributes to the generation of a proton gradient across the mitochondrial membrane that is then used for ATP synthesis. The protein is Cytochrome b (MT-CYB) of Acrantophis dumerili (Dumeril's ground boa).